The sequence spans 894 residues: Protein translocase subunit SecA (894 aa).

Residues Gln87, 105–109 (GEGKT), and Asp512 contribute to the ATP site. The disordered stretch occupies residues 857–894 (FNLGDEPEAQQPVTSKKVGRNEPCPCGSGKKYKQCCGK). Zn(2+)-binding residues include Cys880, Cys882, Cys891, and Cys892.

It belongs to the SecA family. As to quaternary structure, monomer and homodimer. Part of the essential Sec protein translocation apparatus which comprises SecA, SecYEG and auxiliary proteins SecDF-YajC and YidC. The cofactor is Zn(2+).

The protein localises to the cell inner membrane. The protein resides in the cytoplasm. The enzyme catalyses ATP + H2O + cellular proteinSide 1 = ADP + phosphate + cellular proteinSide 2.. Functionally, part of the Sec protein translocase complex. Interacts with the SecYEG preprotein conducting channel. Has a central role in coupling the hydrolysis of ATP to the transfer of proteins into and across the cell membrane, serving as an ATP-driven molecular motor driving the stepwise translocation of polypeptide chains across the membrane. The chain is Protein translocase subunit SecA from Geotalea uraniireducens (strain Rf4) (Geobacter uraniireducens).